Reading from the N-terminus, the 492-residue chain is 1-aminocyclopropane-1-carboxylate synthase 1 (492 aa).

Lys277 carries the N6-(pyridoxal phosphate)lysine modification.

It belongs to the class-I pyridoxal-phosphate-dependent aminotransferase family. In terms of assembly, homodimer. Requires pyridoxal 5'-phosphate as cofactor.

It carries out the reaction S-adenosyl-L-methionine = 1-aminocyclopropane-1-carboxylate + S-methyl-5'-thioadenosine + H(+). It functions in the pathway alkene biosynthesis; ethylene biosynthesis via S-adenosyl-L-methionine; ethylene from S-adenosyl-L-methionine: step 1/2. Functionally, catalyzes the formation of 1-aminocyclopropane-1-carboxylate, a direct precursor of ethylene in higher plants. This is 1-aminocyclopropane-1-carboxylate synthase 1 (ACS1) from Prunus mume (Japanese apricot).